The following is a 339-amino-acid chain: U11/U12 small nuclear ribonucleoprotein 48 kDa protein (339 aa).

The segment at 55–82 (VVICPYDSNHHMPKSSLAKHMASCRLRK) adopts a CHHC U11-48K-type zinc-finger fold. Zn(2+) contacts are provided by Cys-58, His-64, His-74, and Cys-78. Residues Lys-87 and Lys-104 each participate in a glycyl lysine isopeptide (Lys-Gly) (interchain with G-Cter in SUMO2) cross-link. A disordered region spans residues 255–339 (HWQEEQEKAE…HSHKRRKQKI (85 aa)). The segment covering 294–309 (RHRRDRSRSPHKRKRN) has biased composition (basic residues). The segment covering 310-328 (KDKDKNCESRRRKERDGER) has biased composition (basic and acidic residues). A compositionally biased stretch (basic residues) spans 329-339 (HHSHKRRKQKI).

In terms of assembly, component of the U11/U12 snRNPs that are part of the U12-type spliceosome. Not found in the major spliceosome.

Its subcellular location is the nucleus. In terms of biological role, likely involved in U12-type 5' splice site recognition. In Homo sapiens (Human), this protein is U11/U12 small nuclear ribonucleoprotein 48 kDa protein (SNRNP48).